Consider the following 182-residue polypeptide: Ribosome maturation factor RimM (182 aa).

In terms of domain architecture, PRC barrel spans glutamate 102–phenylalanine 182.

This sequence belongs to the RimM family. As to quaternary structure, binds ribosomal protein uS19.

The protein localises to the cytoplasm. An accessory protein needed during the final step in the assembly of 30S ribosomal subunit, possibly for assembly of the head region. Essential for efficient processing of 16S rRNA. May be needed both before and after RbfA during the maturation of 16S rRNA. It has affinity for free ribosomal 30S subunits but not for 70S ribosomes. This is Ribosome maturation factor RimM from Yersinia pseudotuberculosis serotype IB (strain PB1/+).